The sequence spans 488 residues: Bifunctional protein NifU/MnmA (488 aa).

The tract at residues 1–130 (MPERYGPRVI…DYWSRQGDAL (130 aa)) is nifU-like protein. Positions 143-488 (RRGVVAAMSG…GGGIIARRDA (346 aa)) are tRNA-specific 2-thiouridylase MnmA. Residues 149-156 (AMSGGVDS) and F175 contribute to the ATP site. The active-site Nucleophile is the C240. An intrachain disulfide couples C240 to C333. An ATP-binding site is contributed by G264. The segment at 283 to 285 (KDQ) is interaction with tRNA. The active-site Cysteine persulfide intermediate is C333. Positions 433 to 434 (RY) are interaction with tRNA.

In the N-terminal section; belongs to the NifU family. This sequence in the C-terminal section; belongs to the MnmA/TRMU family.

The protein resides in the cytoplasm. The enzyme catalyses S-sulfanyl-L-cysteinyl-[protein] + uridine(34) in tRNA + AH2 + ATP = 2-thiouridine(34) in tRNA + L-cysteinyl-[protein] + A + AMP + diphosphate + H(+). May be involved in the formation or repair of [Fe-S] clusters present in iron-sulfur proteins. Functionally, catalyzes the 2-thiolation of uridine at the wobble position (U34) of tRNA, leading to the formation of s(2)U34. The sequence is that of Bifunctional protein NifU/MnmA (nifU/mnmA) from Rubrobacter xylanophilus (strain DSM 9941 / JCM 11954 / NBRC 16129 / PRD-1).